Reading from the N-terminus, the 165-residue chain is Protein phosphatase 1 regulatory subunit 14C (165 aa).

Positions Met-1–Gly-12 are enriched in low complexity. Residues Met-1–Thr-73 form a disordered region. Ser-2 is subject to N-acetylserine. Phosphoserine is present on Ser-25. Arg-27 is subject to Omega-N-methylarginine. At Ser-33 the chain carries Phosphoserine. Positions Gly-35–Gln-63 are enriched in low complexity. Position 73 is a phosphothreonine; by ILK1 (Thr-73).

This sequence belongs to the PP1 inhibitor family. In terms of processing, has over 600-fold higher inhibitory activity when phosphorylated, creating a molecular switch for regulating the phosphorylation status of PPP1CA substrates and smooth muscle contraction. The main inhibitory site appears to be Thr-73. In terms of tissue distribution, detected in breast cancer.

It is found in the cytoplasm. The protein resides in the membrane. Its function is as follows. Inhibitor of the PP1 regulatory subunit PPP1CA. This chain is Protein phosphatase 1 regulatory subunit 14C (PPP1R14C), found in Homo sapiens (Human).